The primary structure comprises 48 residues: uncharacterized protein (48 aa).

Residues 6–26 (IILLMIVCLVVSVLVVVWIIL) form a helical membrane-spanning segment.

It is found in the host membrane. This is an uncharacterized protein from Spiroplasma melliferum (SpV4).